Consider the following 437-residue polypeptide: MEVFEAIESGCVSDVIKALKGNDSDPNMVNEYGCSLLHCAVENGNTEIARILLLEGANPDLYTESTPTALHRAVILRHYDIVNLLMEFNVDPDNYENHESRTPLEYAVKLNDVKMTKTLLDYGADAEDIYRFNCPINDAAANGNLEICKLLIDAGARINSRSMGSVYTIHHAIRSGNYELVVELLSRGALPDVEDELSFSSLHHAVMEGSADMVLTLLEHGASVDVQDFCGRTPLFLAANASELDIVKVLLDFWADTSVSSGRNTPLSVCDLNSDTGIEIAKQIISTMVINTEYKYHKVINEEARRNDLEIIESNNEMKDWKDSCIEEVEKMRKTTLGSDRRSLLDLCLNCDDNAIAKCLNCISCEGFFIYRQLIEYTIERGLLRHESLDKALDVMEKAFEKNRNVKDNGLKDWSDLPLGIKYDILEKIDEEDLPYC.

ANK repeat units follow at residues 32 to 61, 65 to 94, 99 to 128, 131 to 160, 164 to 195, 197 to 226, and 230 to 259; these read YGCS…NPDL, STPT…DPDN, ESRT…DAED, RFNC…RINS, GSVY…DVED, LSFS…SVDV, and CGRT…DTSV.

The sequence is that of Putative ankyrin repeat protein FPV014 from Fowlpox virus (strain NVSL) (FPV).